The primary structure comprises 335 residues: MPQILIFTYLNMFYFFPPLQILAENLTMVTEFLLLGFSSLGEIQLALFVVFLFLYLVILSGNVTIISVIHLDKSLHTPMYFFLGILSTSETFYTFVILPKMLINLLSVARTISFNCCALQMFFFLGFAITNCLLLGVMGYDRYAAICHPLHYPTLMSWQVCGKLAAACAIGGFLASLTVVNLVFSLPFCSANKVNHYFCDISAVILLACTNTDVNEFVIFICGVLVLVVPFLFICVSYLCILRTILKIPSAEGRRKAFSTCASHLSVVIVHYGCASFIYLRPTANYVSNKDRLVTVTYTIVTPLLNPMVYSLRNKDVQLAIRKVLGKKGSLKLYN.

Over 1–45 (MPQILIFTYLNMFYFFPPLQILAENLTMVTEFLLLGFSSLGEIQL) the chain is Extracellular. N-linked (GlcNAc...) asparagine glycosylation occurs at Asn-25. A helical membrane pass occupies residues 46–66 (ALFVVFLFLYLVILSGNVTII). Residues 67-74 (SVIHLDKS) lie on the Cytoplasmic side of the membrane. A helical transmembrane segment spans residues 75–95 (LHTPMYFFLGILSTSETFYTF). The Extracellular portion of the chain corresponds to 96–119 (VILPKMLINLLSVARTISFNCCAL). A disulfide bridge links Cys-117 with Cys-209. Residues 120–140 (QMFFFLGFAITNCLLLGVMGY) traverse the membrane as a helical segment. At 141 to 159 (DRYAAICHPLHYPTLMSWQ) the chain is on the cytoplasmic side. Residues 160–180 (VCGKLAAACAIGGFLASLTVV) form a helical membrane-spanning segment. The Extracellular portion of the chain corresponds to 181 to 217 (NLVFSLPFCSANKVNHYFCDISAVILLACTNTDVNEF). A helical membrane pass occupies residues 218 to 237 (VIFICGVLVLVVPFLFICVS). The Cytoplasmic segment spans residues 238–257 (YLCILRTILKIPSAEGRRKA). A helical membrane pass occupies residues 258 to 278 (FSTCASHLSVVIVHYGCASFI). Topologically, residues 279 to 291 (YLRPTANYVSNKD) are extracellular. Residues 292–312 (RLVTVTYTIVTPLLNPMVYSL) form a helical membrane-spanning segment. The Cytoplasmic portion of the chain corresponds to 313–335 (RNKDVQLAIRKVLGKKGSLKLYN).

It belongs to the G-protein coupled receptor 1 family.

It localises to the cell membrane. Odorant receptor. In Homo sapiens (Human), this protein is Olfactory receptor 10R2 (OR10R2).